The following is a 244-amino-acid chain: 2-C-methyl-D-erythritol 4-phosphate cytidylyltransferase (244 aa).

It belongs to the IspD/TarI cytidylyltransferase family. IspD subfamily.

The catalysed reaction is 2-C-methyl-D-erythritol 4-phosphate + CTP + H(+) = 4-CDP-2-C-methyl-D-erythritol + diphosphate. It participates in isoprenoid biosynthesis; isopentenyl diphosphate biosynthesis via DXP pathway; isopentenyl diphosphate from 1-deoxy-D-xylulose 5-phosphate: step 2/6. Its function is as follows. Catalyzes the formation of 4-diphosphocytidyl-2-C-methyl-D-erythritol from CTP and 2-C-methyl-D-erythritol 4-phosphate (MEP). This Solibacter usitatus (strain Ellin6076) protein is 2-C-methyl-D-erythritol 4-phosphate cytidylyltransferase.